The chain runs to 309 residues: Probable WRKY transcription factor 26 (309 aa).

The tract at residues 1–24 is disordered; the sequence is MGSFDRQRAVPKFKTATPSPLPLS. Residues 111-176 constitute a DNA-binding region (WRKY 1); it reads SSNKTSDDGY…YKGSHNHPKP (66 aa). Residues Cys142, Cys147, His171, and His173 each coordinate Zn(2+). Positions 167–210 are disordered; the sequence is YKGSHNHPKPQSTKRSSSTAIAAHQNSSNGDGKDIGEDETEAKR. A compositionally biased stretch (polar residues) spans 175-196; it reads KPQSTKRSSSTAIAAHQNSSNG. Basic and acidic residues predominate over residues 197–210; the sequence is DGKDIGEDETEAKR. A DNA-binding region (WRKY 2) is located at residues 228-293; sequence SDIDILDDGY…YEGKHKHQIP (66 aa). Cys259, Cys264, His288, and His290 together coordinate Zn(2+).

The protein belongs to the WRKY group I family. In terms of assembly, interacts with VQ10.

The protein resides in the nucleus. Functionally, transcription factor. Interacts specifically with the W box (5'-(T)TGAC[CT]-3'), a frequently occurring elicitor-responsive cis-acting element. Functions with WRKY25 and WRKY33 as positive regulator of plant thermotolerance by partially participating in ethylene-response signal transduction pathway. The sequence is that of Probable WRKY transcription factor 26 (WRKY26) from Arabidopsis thaliana (Mouse-ear cress).